Consider the following 259-residue polypeptide: Protein unc-50 homolog A (259 aa).

At 1–82 the chain is on the cytoplasmic side; it reads MLPTTSVSPR…TKDQWARDDP (82 aa). Residues 83 to 103 form a helical membrane-spanning segment; it reads AFLVLLSIWLCVSTVGFGFVL. Residues 104-112 are Lumenal-facing; the sequence is DMSFFETFK. The chain crosses the membrane as a helical span at residues 113–133; sequence LLLWVVFIDCVGVGLLIATLM. The Cytoplasmic segment spans residues 134-158; the sequence is WFVSNKYMVKRQGKDYDVEWGYTFD. A helical transmembrane segment spans residues 159–179; the sequence is VHLNAFYPLLVILHFIQLFFI. The Lumenal segment spans residues 180–181; sequence NH. The helical transmembrane segment at 182-202 threads the bilayer; it reads VILSGWFIGYFVGNTIWLIAI. At 203 to 222 the chain is on the cytoplasmic side; it reads GYYIYITFLGYSALPFLKNT. Residues 223–243 traverse the membrane as a helical segment; it reads VILLYPFAALALLYVLSLALG. Over 244–259 the chain is Lumenal; that stretch reads WNFTEKLCLFYKYRVR.

The protein belongs to the unc-50 family.

It is found in the nucleus inner membrane. It localises to the golgi apparatus membrane. Involved in the cell surface expression of neuronal nicotinic receptors. Binds RNA. The chain is Protein unc-50 homolog A (unc50-a) from Xenopus laevis (African clawed frog).